Consider the following 459-residue polypeptide: Argininosuccinate lyase (459 aa).

It belongs to the lyase 1 family. Argininosuccinate lyase subfamily.

The protein localises to the cytoplasm. It carries out the reaction 2-(N(omega)-L-arginino)succinate = fumarate + L-arginine. The protein operates within amino-acid biosynthesis; L-arginine biosynthesis; L-arginine from L-ornithine and carbamoyl phosphate: step 3/3. This Lactococcus lactis subsp. cremoris (strain SK11) protein is Argininosuccinate lyase.